Reading from the N-terminus, the 341-residue chain is Ketol-acid reductoisomerase (NADP(+)) (341 aa).

In terms of domain architecture, KARI N-terminal Rossmann spans 2–182 (TDIVYDKDAD…GGLRAGGIRT (181 aa)). Residues 25–28 (YGSQ), lysine 48, serine 51, serine 53, and 83–86 (DQHQ) each bind NADP(+). Residue histidine 108 is part of the active site. Glycine 134 lines the NADP(+) pocket. The region spanning 183–328 (TFTEETETDL…RELRKLFAWN (146 aa)) is the KARI C-terminal knotted domain. Mg(2+)-binding residues include aspartate 191, glutamate 195, glutamate 227, and glutamate 231. Serine 252 provides a ligand contact to substrate.

Belongs to the ketol-acid reductoisomerase family. The cofactor is Mg(2+).

The enzyme catalyses (2R)-2,3-dihydroxy-3-methylbutanoate + NADP(+) = (2S)-2-acetolactate + NADPH + H(+). The catalysed reaction is (2R,3R)-2,3-dihydroxy-3-methylpentanoate + NADP(+) = (S)-2-ethyl-2-hydroxy-3-oxobutanoate + NADPH + H(+). It participates in amino-acid biosynthesis; L-isoleucine biosynthesis; L-isoleucine from 2-oxobutanoate: step 2/4. It functions in the pathway amino-acid biosynthesis; L-valine biosynthesis; L-valine from pyruvate: step 2/4. Involved in the biosynthesis of branched-chain amino acids (BCAA). Catalyzes an alkyl-migration followed by a ketol-acid reduction of (S)-2-acetolactate (S2AL) to yield (R)-2,3-dihydroxy-isovalerate. In the isomerase reaction, S2AL is rearranged via a Mg-dependent methyl migration to produce 3-hydroxy-3-methyl-2-ketobutyrate (HMKB). In the reductase reaction, this 2-ketoacid undergoes a metal-dependent reduction by NADPH to yield (R)-2,3-dihydroxy-isovalerate. This chain is Ketol-acid reductoisomerase (NADP(+)), found in Clavibacter michiganensis subsp. michiganensis (strain NCPPB 382).